The following is a 140-amino-acid chain: Probable lipoprotein LppE (140 aa).

The N-terminal stretch at 1-21 (MCNRLVTVTGVAMVVAAGLSA) is a signal peptide. Residue Cys-22 is the site of N-palmitoyl cysteine attachment. Cys-22 is lipidated: S-diacylglycerol cysteine.

This sequence belongs to the mycobacterial 19 kDa antigen family.

It is found in the cell membrane. This Mycobacterium tuberculosis (strain ATCC 25618 / H37Rv) protein is Probable lipoprotein LppE (lppE).